The chain runs to 206 residues: Large ribosomal subunit protein uL4 (206 aa).

The disordered stretch occupies residues 47–75 (GTQSAKTRAEVSGGGIKPWRQKGTGRARQ).

It belongs to the universal ribosomal protein uL4 family. As to quaternary structure, part of the 50S ribosomal subunit.

Functionally, one of the primary rRNA binding proteins, this protein initially binds near the 5'-end of the 23S rRNA. It is important during the early stages of 50S assembly. It makes multiple contacts with different domains of the 23S rRNA in the assembled 50S subunit and ribosome. In terms of biological role, forms part of the polypeptide exit tunnel. In Clostridium botulinum (strain ATCC 19397 / Type A), this protein is Large ribosomal subunit protein uL4.